We begin with the raw amino-acid sequence, 682 residues long: K(+)-insensitive pyrophosphate-energized proton pump 2 (682 aa).

A run of 5 helical transmembrane segments spans residues 1-21 (MELF…ALYM), 56-76 (TIAG…RQYH), 78-98 (AVAF…GMYV), 130-150 (LAVT…FGGA), and 160-180 (IVGF…SGGI). A substrate-binding site is contributed by K183. 3 residues coordinate Mg(2+): D186, D190, and D216. 7 helical membrane-spanning segments follow: residues 237 to 257 (IGAM…GIVF), 258 to 278 (PLVA…FVRA), 291 to 311 (GYIV…RYML), 318 to 338 (FIYF…FVLI), 353 to 373 (IARA…AVGF), 375 to 395 (STAL…WLGL), and 404 to 424 (LYGT…ILAM). Residue D432 participates in Mg(2+) binding. Helical transmembrane passes span 468 to 488 (YAIG…IDEV), 506 to 526 (EVFV…STAI), 574 to 594 (MVLP…VLKA), and 595 to 615 (EAAA…ALFL). 3 residues coordinate Ca(2+): D623, D649, and D653. A substrate-binding site is contributed by K656. A helical membrane pass occupies residues 662–682 (SLHVLVKLISTITLVLAGLFI).

The protein belongs to the H(+)-translocating pyrophosphatase (TC 3.A.10) family. K(+)-insensitive subfamily. Homodimer. Requires Mg(2+) as cofactor.

It localises to the cell membrane. It catalyses the reaction diphosphate + H2O + H(+)(in) = 2 phosphate + 2 H(+)(out). Its function is as follows. Proton pump that utilizes the energy of pyrophosphate hydrolysis as the driving force for proton movement across the membrane. Generates a proton motive force. This Moorella thermoacetica (strain ATCC 39073 / JCM 9320) protein is K(+)-insensitive pyrophosphate-energized proton pump 2.